Reading from the N-terminus, the 115-residue chain is U3-lycotoxin-Ls1a (115 aa).

The signal sequence occupies residues 1 to 20 (MKFVLLFGVLLVTLFSYSSA). Residues 21–44 (EMLDDFDQADEEELLSLIEKEEAR) constitute a propeptide that is removed on maturation. 4 cysteine pairs are disulfide-bonded: C48-C63, C55-C72, C62-C87, and C74-C85.

This sequence belongs to the neurotoxin 19 (CSTX) family. 01 subfamily. As to expression, expressed by the venom gland.

The protein localises to the secreted. The chain is U3-lycotoxin-Ls1a from Lycosa singoriensis (Wolf spider).